We begin with the raw amino-acid sequence, 30 residues long: MPLNIQNIIIIINSSLIIILFSSIFFFQLT.

The helical transmembrane segment at 7-27 (NIIIIINSSLIIILFSSIFFF) threads the bilayer.

Belongs to the complex I subunit 5 family.

It is found in the mitochondrion inner membrane. It catalyses the reaction a ubiquinone + NADH + 5 H(+)(in) = a ubiquinol + NAD(+) + 4 H(+)(out). Functionally, core subunit of the mitochondrial membrane respiratory chain NADH dehydrogenase (Complex I) that is believed to belong to the minimal assembly required for catalysis. Complex I functions in the transfer of electrons from NADH to the respiratory chain. The immediate electron acceptor for the enzyme is believed to be ubiquinone. The chain is NADH-ubiquinone oxidoreductase chain 5 (ND5) from Pisaster ochraceus (Ochre sea star).